A 75-amino-acid chain; its full sequence is 8.9 kDa basic protein (75 aa).

This chain is 8.9 kDa basic protein (P8.9), found in Orgyia pseudotsugata (Douglas-fir tussock moth).